The primary structure comprises 297 residues: Iron/alpha-ketoglutarate-dependent dioxygenase ausU (297 aa).

Fe cation is bound by residues H130, D132, and H206.

This sequence belongs to the PhyH family. Homodimer. Fe cation serves as cofactor.

Its pathway is secondary metabolite biosynthesis; terpenoid biosynthesis. Functionally, iron/alpha-ketoglutarate-dependent dioxygenase; part of the gene cluster that mediates the biosynthesis of calidodehydroaustin, a fungal meroterpenoid. The first step of the pathway is the synthesis of 3,5-dimethylorsellinic acid by the polyketide synthase ausA. 3,5-dimethylorsellinic acid is then prenylated by the polyprenyl transferase ausN. Further epoxidation by the FAD-dependent monooxygenase ausM and cyclization by the probable terpene cyclase ausL lead to the formation of protoaustinoid A. Protoaustinoid A is then oxidized to spiro-lactone preaustinoid A3 by the combined action of the FAD-binding monooxygenases ausB and ausC, and the dioxygenase ausE. Acid-catalyzed keto-rearrangement and ring contraction of the tetraketide portion of preaustinoid A3 by ausJ lead to the formation of preaustinoid A4. The aldo-keto reductase ausK, with the help of ausH, is involved in the next step by transforming preaustinoid A4 into isoaustinone which is in turn hydroxylated by the P450 monooxygenase ausI to form austinolide. The cytochrome P450 monooxygenase ausG modifies austinolide to austinol. Austinol is further acetylated to austin by the O-acetyltransferase ausP, which spontaneously changes to dehydroaustin. The cytochrome P450 monooxygenase ausR then converts dehydroaustin is into 7-dehydrodehydroaustin. The hydroxylation catalyzed by ausR permits the O-acetyltransferase ausQ to add an additional acetyl group to the molecule, leading to the formation of acetoxydehydroaustin. The short chain dehydrogenase ausT catalyzes the reduction of the double bond present between carbon atoms 1 and 2 to convert 7-dehydrodehydroaustin into 1,2-dihydro-7-hydroxydehydroaustin. AusQ catalyzes not only an acetylation reaction but also the addition of the PKS ausV diketide product to 1,2-dihydro-7-hydroxydehydroaustin, forming precalidodehydroaustin. Finally, the iron/alpha-ketoglutarate-dependent dioxygenase converts precalidodehydroaustin into calidodehydroaustin. In Aspergillus calidoustus, this protein is Iron/alpha-ketoglutarate-dependent dioxygenase ausU.